A 160-amino-acid polypeptide reads, in one-letter code: MTNKVIYPGTFDPITNGHTDLIGRAARLFDEVVVGVANSPSKRPLFDLAERVLLARQVTAHLPNVKVVGFSGLLVDFAKEQQANVLIRGLRAVSDFEYEFQLANMNRRLMPELESVFLTPAEENSFISSTLVKEVALHGGDIRQFVDPIVAKAIAAKQGK.

Thr10 provides a ligand contact to substrate. Residues 10-11 and His18 contribute to the ATP site; that span reads TF. Residues Lys42, Leu74, and Arg88 each coordinate substrate. ATP-binding positions include 89-91, Glu99, and 124-130; these read GLR and NSFISST.

The protein belongs to the bacterial CoaD family. As to quaternary structure, homohexamer. Requires Mg(2+) as cofactor.

The protein localises to the cytoplasm. The enzyme catalyses (R)-4'-phosphopantetheine + ATP + H(+) = 3'-dephospho-CoA + diphosphate. Its pathway is cofactor biosynthesis; coenzyme A biosynthesis; CoA from (R)-pantothenate: step 4/5. Reversibly transfers an adenylyl group from ATP to 4'-phosphopantetheine, yielding dephospho-CoA (dPCoA) and pyrophosphate. In Aeromonas salmonicida (strain A449), this protein is Phosphopantetheine adenylyltransferase.